Here is a 492-residue protein sequence, read N- to C-terminus: Probable serine/threonine-protein kinase WNK9 (492 aa).

The Protein kinase domain maps to 25–282 (GRYNEVLGKG…ACELLDDHFL (258 aa)). ATP-binding positions include 105–108 (TEMF) and Lys-155. The Proton acceptor role is filled by Asp-172.

This sequence belongs to the protein kinase superfamily. Ser/Thr protein kinase family. WNK subfamily.

It catalyses the reaction L-seryl-[protein] + ATP = O-phospho-L-seryl-[protein] + ADP + H(+). The enzyme catalyses L-threonyl-[protein] + ATP = O-phospho-L-threonyl-[protein] + ADP + H(+). May regulate flowering time by modulating the photoperiod pathway. This Arabidopsis thaliana (Mouse-ear cress) protein is Probable serine/threonine-protein kinase WNK9 (WNK9).